Consider the following 78-residue polypeptide: Conotoxin 6 (78 aa).

The N-terminal stretch at 1-22 (MKLTCMMIVAVLFLTAWIFITA) is a signal peptide. A propeptide spanning residues 23–51 (DNSRNGIENLPRMRRHEMKNPKASKLNKR) is cleaved from the precursor. 3 disulfides stabilise this stretch: cysteine 53–cysteine 69, cysteine 60–cysteine 73, and cysteine 68–cysteine 77.

It belongs to the conotoxin O1 superfamily. In terms of tissue distribution, expressed by the venom duct.

Its subcellular location is the secreted. This chain is Conotoxin 6, found in Conus imperialis (Imperial cone).